The following is a 515-amino-acid chain: mRNA export factor ICP27 homolog (515 aa).

The Zn(2+) site is built by Cys230, His335, Cys337, and Cys342. The CHC2-type zinc-finger motif lies at 230-342 (CVFNDNGHGD…SNHKCDDVSC (113 aa)). A compositionally biased stretch (polar residues) spans 398–408 (YSTNHDLPQTS). The tract at residues 398–422 (YSTNHDLPQTSHRSHKNHGTPKVKS) is disordered. Positions 409 to 422 (HRSHKNHGTPKVKS) are enriched in basic residues.

This sequence belongs to the HHV-1 ICP27 protein family.

The protein localises to the virion tegument. It is found in the virion. It localises to the host nucleus. Its subcellular location is the host cytoplasm. Immediate early (EI) protein that plays many roles during productive infection including regulation of viral gene expression and nuclear export of intronless viral RNAs. The polypeptide is mRNA export factor ICP27 homolog (Human herpesvirus 6A (strain Uganda-1102) (HHV-6 variant A)).